Reading from the N-terminus, the 383-residue chain is Succinyl-diaminopimelate desuccinylase (383 aa).

Residue His-79 coordinates Zn(2+). Asp-81 is a catalytic residue. Residue Asp-110 participates in Zn(2+) binding. The active-site Proton acceptor is the Glu-141. Residues Glu-142, Glu-170, and His-355 each contribute to the Zn(2+) site.

This sequence belongs to the peptidase M20A family. DapE subfamily. As to quaternary structure, homodimer. It depends on Zn(2+) as a cofactor. Requires Co(2+) as cofactor.

It catalyses the reaction N-succinyl-(2S,6S)-2,6-diaminopimelate + H2O = (2S,6S)-2,6-diaminopimelate + succinate. It participates in amino-acid biosynthesis; L-lysine biosynthesis via DAP pathway; LL-2,6-diaminopimelate from (S)-tetrahydrodipicolinate (succinylase route): step 3/3. Its function is as follows. Catalyzes the hydrolysis of N-succinyl-L,L-diaminopimelic acid (SDAP), forming succinate and LL-2,6-diaminopimelate (DAP), an intermediate involved in the bacterial biosynthesis of lysine and meso-diaminopimelic acid, an essential component of bacterial cell walls. This is Succinyl-diaminopimelate desuccinylase from Helicobacter pylori (strain HPAG1).